Reading from the N-terminus, the 337-residue chain is Vacuolar protein sorting-associated protein 26B-A (337 aa).

A disordered region spans residues 313 to 337; the sequence is RFEGTSHPETRPQHSGAAAVEQEHE.

This sequence belongs to the VPS26 family. Component of the heterotrimeric retromer cargo-selective complex (CSC) which is believed to associate with variable sorting nexins to form functionally distinct retromer complex variants.

It localises to the cytoplasm. The protein localises to the endosome membrane. It is found in the early endosome. Its function is as follows. Acts as a component of the retromer cargo-selective complex (CSC). The CSC is believed to be the core functional component of retromer or respective retromer complex variants acting to prevent missorting of selected transmembrane cargo proteins into the lysosomal degradation pathway. Retromer mediates retrograde transport of cargo proteins from endosomes to the trans-Golgi network (TGN). The chain is Vacuolar protein sorting-associated protein 26B-A (vps26b-a) from Xenopus laevis (African clawed frog).